Reading from the N-terminus, the 394-residue chain is Putative 8-amino-7-oxononanoate synthase (394 aa).

Arg30 contributes to the substrate binding site. Gly117–Tyr118 serves as a coordination point for pyridoxal 5'-phosphate. His142 is a binding site for substrate. Pyridoxal 5'-phosphate-binding positions include Ser190, Asp215–His218, and Thr246–Lys249. Lys249 bears the N6-(pyridoxal phosphate)lysine mark. Position 364 (Thr364) interacts with substrate.

This sequence belongs to the class-II pyridoxal-phosphate-dependent aminotransferase family. BioF subfamily. Homodimer. Requires pyridoxal 5'-phosphate as cofactor.

The catalysed reaction is 6-carboxyhexanoyl-[ACP] + L-alanine + H(+) = (8S)-8-amino-7-oxononanoate + holo-[ACP] + CO2. Its pathway is cofactor biosynthesis; biotin biosynthesis. Catalyzes the decarboxylative condensation of pimeloyl-[acyl-carrier protein] and L-alanine to produce 8-amino-7-oxononanoate (AON), [acyl-carrier protein], and carbon dioxide. In Nostoc punctiforme (strain ATCC 29133 / PCC 73102), this protein is Putative 8-amino-7-oxononanoate synthase (bioF).